We begin with the raw amino-acid sequence, 348 residues long: Dihydroorotase (348 aa).

Zn(2+) is bound by residues histidine 14 and histidine 16. Substrate-binding positions include 16-18 (HLR) and asparagine 42. Zn(2+)-binding residues include lysine 100, histidine 137, and histidine 175. Residue lysine 100 is modified to N6-carboxylysine. Histidine 137 contacts substrate. Leucine 220 contributes to the substrate binding site. Residue aspartate 248 coordinates Zn(2+). Aspartate 248 is an active-site residue. Histidine 252 and alanine 264 together coordinate substrate.

The protein belongs to the metallo-dependent hydrolases superfamily. DHOase family. Class II DHOase subfamily. Homodimer. Zn(2+) serves as cofactor.

It carries out the reaction (S)-dihydroorotate + H2O = N-carbamoyl-L-aspartate + H(+). It participates in pyrimidine metabolism; UMP biosynthesis via de novo pathway; (S)-dihydroorotate from bicarbonate: step 3/3. Its function is as follows. Catalyzes the reversible cyclization of carbamoyl aspartate to dihydroorotate. In Pseudomonas aeruginosa (strain LESB58), this protein is Dihydroorotase.